The chain runs to 671 residues: K(+)-insensitive pyrophosphate-energized proton pump (671 aa).

Transmembrane regions (helical) follow at residues 4 to 24 (LIFTAPLAGLISLTFAAFFAK), 57 to 77 (TIAVVSVIISLLILFLLDEGL), 79 to 99 (IAAGFLAGAISSAAAGYIGMS), 128 to 148 (AVTGLAVIGLALLGTSSLYIL), and 156 to 176 (VGFGFGASLISLFARAGGGIF). Lys-178 is a binding site for substrate. Residues Asp-181, Asp-185, Asn-208, and Asp-211 each contribute to the Mg(2+) site. Transmembrane regions (helical) follow at residues 223–243 (LFETYVVTSLAAMLLGSLIIG), 249–269 (VLYPLMLGSAAIFASIISVFF), 285–305 (GVGGSTVLSLIAFYYITGFLM), 310–330 (FFYVTVAGVVITVLMVIVTEY), 365–385 (TLVPAVVIAAGILVSYFIVGG), and 393–413 (LYGIAIASVAMLSTAGMIVAL). A Mg(2+)-binding site is contributed by Asp-421. 4 consecutive transmembrane segments (helical) span residues 452-472 (AVTKGYAIGSTALGALALFAD), 490-510 (VVLSGILLGAVLPFLFSAVMM), 558-578 (MAMPGFLAVIIPLLTGFFLGP), and 579-599 (EALAGLLTGLIVVGFMLALMM). Asp-607, Asp-633, and Asp-637 together coordinate Ca(2+). Lys-640 serves as a coordination point for substrate. The chain crosses the membrane as a helical span at residues 650–670 (LIKVVNMVAILFSPLIIGGGF).

Belongs to the H(+)-translocating pyrophosphatase (TC 3.A.10) family. K(+)-insensitive subfamily. Homodimer. Mg(2+) serves as cofactor.

Its subcellular location is the cell membrane. The catalysed reaction is diphosphate + H2O + H(+)(in) = 2 phosphate + 2 H(+)(out). In terms of biological role, proton pump that utilizes the energy of pyrophosphate hydrolysis as the driving force for proton movement across the membrane. Generates a proton motive force. The sequence is that of K(+)-insensitive pyrophosphate-energized proton pump from Methanosarcina mazei (strain ATCC BAA-159 / DSM 3647 / Goe1 / Go1 / JCM 11833 / OCM 88) (Methanosarcina frisia).